An 840-amino-acid chain; its full sequence is Cullin-4 (840 aa).

Residues 1-11 (MTSGAPPTIST) show a composition bias toward polar residues. Positions 1-82 (MTSGAPPTIS…TGNSSRTTAT (82 aa)) are disordered. The segment covering 33–48 (TEAKQMRGDTENRSDG) has biased composition (basic and acidic residues). A compositionally biased stretch (polar residues) spans 69 to 82 (FRSQTGNSSRTTAT). The region spanning 772–831 (DRQYKIDAAVVRIMKARKQLNHQTLMTELLQQLRFPVSTADIKKRLESLIEREYISRDPE) is the Cullin neddylation domain. Lysine 786 is covalently cross-linked (Glycyl lysine isopeptide (Lys-Gly) (interchain with G-Cter in NEDD8)).

It belongs to the cullin family. As to quaternary structure, part of an E3 ubiquitin-protein ligase complex including cul-4 and ddb-1. Neddylated. Deneddylated via its interaction with the COP9 signalosome (CSN) complex.

It participates in protein modification; protein ubiquitination. Component of cullin-based E3 ubiquitin-protein ligase complexes which mediate the ubiquitination and subsequent proteasomal degradation of target proteins. The functional specificity of the E3 ubiquitin-protein ligase complex depends on the variable substrate recognition component. In association with ddb-1 directs ubiquitination of cdt-1 during S phase and is required for restraining DNA rereplication. Probably is involved in ubiquitination of cki-1. The sequence is that of Cullin-4 (cul-4) from Caenorhabditis elegans.